A 372-amino-acid polypeptide reads, in one-letter code: DNA replication and repair protein RecF (372 aa).

30–37 provides a ligand contact to ATP; that stretch reads GENAQGKT.

It belongs to the RecF family.

It localises to the cytoplasm. Functionally, the RecF protein is involved in DNA metabolism; it is required for DNA replication and normal SOS inducibility. RecF binds preferentially to single-stranded, linear DNA. It also seems to bind ATP. The polypeptide is DNA replication and repair protein RecF (Shouchella clausii (strain KSM-K16) (Alkalihalobacillus clausii)).